Here is a 108-residue protein sequence, read N- to C-terminus: Integration host factor subunit alpha (108 aa).

Belongs to the bacterial histone-like protein family. Heterodimer of an alpha and a beta chain.

This protein is one of the two subunits of integration host factor, a specific DNA-binding protein that functions in genetic recombination as well as in transcriptional and translational control. The protein is Integration host factor subunit alpha of Methylorubrum populi (strain ATCC BAA-705 / NCIMB 13946 / BJ001) (Methylobacterium populi).